A 781-amino-acid chain; its full sequence is Beta-mannosyltransferase 4 (781 aa).

Over 1-17 (MTKSYMPLFRSPRQFKK) the chain is Cytoplasmic. The helical transmembrane segment at 18 to 38 (IYFILIPLILAVIILHVFFDG) threads the bilayer. Topologically, residues 39-781 (FNKISEYSPT…EKEDDDDIEV (743 aa)) are extracellular. A coiled-coil region spans residues 640 to 733 (KLGDSEAAIK…AKDEDKNEDE (94 aa)). Basic and acidic residues-rich tracts occupy residues 663-728 (KAEK…KDED) and 736-750 (KEKNDESGLTEKSEV). Positions 663–781 (KAEKEKAEKE…EKEDDDDIEV (119 aa)) are disordered. Positions 751–781 (EENGENTNEGGEDDGDGDGEEEKEDDDDIEV) are enriched in acidic residues.

This sequence belongs to the BMT family.

The protein localises to the membrane. Its function is as follows. Beta-mannosyltransferase involved in cell wall biosynthesis. Required for the elongation of beta-mannose chains on the acid-labile fraction of cell wall phosphopeptidomannan. The chain is Beta-mannosyltransferase 4 (BMT4) from Candida albicans (strain SC5314 / ATCC MYA-2876) (Yeast).